Reading from the N-terminus, the 343-residue chain is MLKTIALDAMGGDHGPKVIVPAALSILKKHPKVKLTLVGKEDQLALLIPEKNRKSFGQRLEIIHASEEVGMDEPPSQALRTKKNSSMRVAINLVKEGQAHACVSAGNTGALMATARYVLKTLPGIDRPAIIAAFPTKNEREVRVLDLGANVDSTPENLYQFAVMGSILSSAAHNIRNPRIGLLNVGEEEIKGNELVKKANELFETRKTINYIGYVEGNTIFNNIADVVVCDGFVGNAVLKASEGVAQLIKQHAKEAFSEAWWTKLALLPAIPILKRLIRRVDPERYNGATFLGLNGIVVKSHGSANIKAFVCAVEEAIFQVDKNIPQLIKEEVAHILKEFENK.

Belongs to the PlsX family. Homodimer. Probably interacts with PlsY.

It is found in the cytoplasm. It catalyses the reaction a fatty acyl-[ACP] + phosphate = an acyl phosphate + holo-[ACP]. It functions in the pathway lipid metabolism; phospholipid metabolism. Catalyzes the reversible formation of acyl-phosphate (acyl-PO(4)) from acyl-[acyl-carrier-protein] (acyl-ACP). This enzyme utilizes acyl-ACP as fatty acyl donor, but not acyl-CoA. The protein is Phosphate acyltransferase of Coxiella burnetii (strain CbuG_Q212) (Coxiella burnetii (strain Q212)).